Consider the following 681-residue polypeptide: MMEKGIWKDALIQSTKKLSPKLQLKNPVMLLVYVGAILATSLYFLGFFGISDEKSGYTLAIALILWFTVLFANFAEAIAEGRGRAQADSLKMARKDVLARKLKNIDDKTDVIEIASNDLKKGDIVYVLANEQIPMDGEVIEGAASVDESAITGESAPVIRESGGDRSAVTGGTTLVSDWLVVRVTAVSGESFLDKMIAMVEGASRKKTPNEIALQILLVTLSIIFLTVSATLLPFTEFASKQAGAGSAISITNVIALLVCLAPTTIGALLSSIGIAGMSRLNQANVLAMSGRAIEAAGDVDVLLLDKTGTITLGNRKASEFLPVDGVTEQELADAAQLSSIADETAEGRSIVVLAKERFDIRGRDFAEMHAEFVPFTATTRMSGIDYQENTIRKGAADAVRAYVTANGGTYPKECDAIVSKVAGAGGTPLVVVRNNKVLGVIYLKDIVKNGVKERFLDLRKMGIKTIMITGDNPMTAAAIAAEAGVDDFLAEATPEAKLELIREYQREGHLVAMTGDGTNDAPALAQADVAVAMNTGTQAAKEAGNMVDLDSSPTKLIDIVRIGKQLLMTRGALTTFSVANDLAKYFAIIPVLFYGIFPQLEALNLMGLTSPTSAILSAIIYNAVIIIILIPLSLKGVKYREMPAGKLLSRNMLIYGLGGLIAPFIAIKLIDMLLTVLGIV.

4 helical membrane-spanning segments follow: residues 30–50 (LLVY…FFGI), 59–79 (LAIA…EAIA), 216–236 (ILLV…LPFT), and 255–275 (IALL…SIGI). The 4-aspartylphosphate intermediate role is filled by aspartate 306. Residues aspartate 343, glutamate 347, 376–383 (FTATTRMS), and lysine 394 contribute to the ATP site. Positions 517 and 521 each coordinate Mg(2+). The next 3 membrane-spanning stretches (helical) occupy residues 587-607 (FAII…LNLM), 615-635 (AILS…PLSL), and 661-681 (LIAP…LGIV).

The protein belongs to the cation transport ATPase (P-type) (TC 3.A.3) family. Type IA subfamily. The system is composed of three essential subunits: KdpA, KdpB and KdpC.

It is found in the cell membrane. The catalysed reaction is K(+)(out) + ATP + H2O = K(+)(in) + ADP + phosphate + H(+). In terms of biological role, part of the high-affinity ATP-driven potassium transport (or Kdp) system, which catalyzes the hydrolysis of ATP coupled with the electrogenic transport of potassium into the cytoplasm. This subunit is responsible for energy coupling to the transport system and for the release of the potassium ions to the cytoplasm. The polypeptide is Potassium-transporting ATPase ATP-binding subunit (Listeria monocytogenes serotype 4a (strain HCC23)).